An 81-amino-acid polypeptide reads, in one-letter code: Large ribosomal subunit protein bL31B (81 aa).

The protein belongs to the bacterial ribosomal protein bL31 family. Type B subfamily. As to quaternary structure, part of the 50S ribosomal subunit.

The sequence is that of Large ribosomal subunit protein bL31B from Lactococcus lactis subsp. lactis (strain IL1403) (Streptococcus lactis).